The primary structure comprises 372 residues: Putative RING-H2 finger protein ATL21A (372 aa).

The signal sequence occupies residues 1 to 20; that stretch reads MTFSKQLFLYLFFLFPLLHA. A helical transmembrane segment spans residues 242–262; the sequence is IILLSIIGPLTIFATCIAVGV. An RING-type; atypical zinc finger spans residues 320–362; the sequence is CPICLSEYASKETVRCIPECDHCFHSECIDVWLKIHGSCPLCR.

This sequence belongs to the RING-type zinc finger family. ATL subfamily.

It localises to the membrane. It carries out the reaction S-ubiquitinyl-[E2 ubiquitin-conjugating enzyme]-L-cysteine + [acceptor protein]-L-lysine = [E2 ubiquitin-conjugating enzyme]-L-cysteine + N(6)-ubiquitinyl-[acceptor protein]-L-lysine.. Its pathway is protein modification; protein ubiquitination. This Arabidopsis thaliana (Mouse-ear cress) protein is Putative RING-H2 finger protein ATL21A (ATL21A).